A 441-amino-acid chain; its full sequence is Proline--tRNA ligase (441 aa).

Belongs to the class-II aminoacyl-tRNA synthetase family. ProS type 2 subfamily. Homodimer.

Its subcellular location is the cytoplasm. It carries out the reaction tRNA(Pro) + L-proline + ATP = L-prolyl-tRNA(Pro) + AMP + diphosphate. Catalyzes the attachment of proline to tRNA(Pro) in a two-step reaction: proline is first activated by ATP to form Pro-AMP and then transferred to the acceptor end of tRNA(Pro). The chain is Proline--tRNA ligase from Methylorubrum populi (strain ATCC BAA-705 / NCIMB 13946 / BJ001) (Methylobacterium populi).